The primary structure comprises 232 residues: Orotidine 5'-phosphate decarboxylase (232 aa).

Residues D13, K35, 62-71 (DLKFHDIPNT), T122, R182, Q191, G211, and R212 contribute to the substrate site. K64 serves as the catalytic Proton donor.

It belongs to the OMP decarboxylase family. Type 1 subfamily. As to quaternary structure, homodimer.

The enzyme catalyses orotidine 5'-phosphate + H(+) = UMP + CO2. Its pathway is pyrimidine metabolism; UMP biosynthesis via de novo pathway; UMP from orotate: step 2/2. Its function is as follows. Catalyzes the decarboxylation of orotidine 5'-monophosphate (OMP) to uridine 5'-monophosphate (UMP). The polypeptide is Orotidine 5'-phosphate decarboxylase (Pseudomonas paraeruginosa (strain DSM 24068 / PA7) (Pseudomonas aeruginosa (strain PA7))).